The chain runs to 336 residues: MIEADRIISAIAKSDDEAVDRAIRPKLLQDYVGQPQVRSQMEIFIQAAKLRQDALDHLLIFGPPGLGKTTLANIVANEMGVNIRTTSGPVLEKAGDLAAMLTNLEPHDVLFIDEIHRLSPAIEEVLYPAMEDYQLDIMIGEGPAARSIKLDLPPFTLIGATTRAGSLTSPLRDRFGIVQRLEFYSIEDLTSIVMRSAACLNLEISDDASHEVARRSRGTPRIANRLLRRVRDYADVKNNGMITQGIAKAALAMLDIDQAGFDYLDRKLLSSIIERFDGGPVGLDNLAAAIGEERDTIEDVLEPYLIQQGFLQRTPRGRIATSQTYRHFGLAKLADK.

Residues 4 to 184 (ADRIISAIAK…FGIVQRLEFY (181 aa)) form a large ATPase domain (RuvB-L) region. ATP-binding positions include isoleucine 23, arginine 24, glycine 65, lysine 68, threonine 69, threonine 70, 131 to 133 (EDY), arginine 174, tyrosine 184, and arginine 221. Threonine 69 lines the Mg(2+) pocket. The interval 185–255 (SIEDLTSIVM…IAKAALAMLD (71 aa)) is small ATPAse domain (RuvB-S). Residues 258–336 (QAGFDYLDRK…HFGLAKLADK (79 aa)) form a head domain (RuvB-H) region. Positions 294, 313, and 318 each coordinate DNA.

It belongs to the RuvB family. Homohexamer. Forms an RuvA(8)-RuvB(12)-Holliday junction (HJ) complex. HJ DNA is sandwiched between 2 RuvA tetramers; dsDNA enters through RuvA and exits via RuvB. An RuvB hexamer assembles on each DNA strand where it exits the tetramer. Each RuvB hexamer is contacted by two RuvA subunits (via domain III) on 2 adjacent RuvB subunits; this complex drives branch migration. In the full resolvosome a probable DNA-RuvA(4)-RuvB(12)-RuvC(2) complex forms which resolves the HJ.

The protein localises to the cytoplasm. The enzyme catalyses ATP + H2O = ADP + phosphate + H(+). The RuvA-RuvB-RuvC complex processes Holliday junction (HJ) DNA during genetic recombination and DNA repair, while the RuvA-RuvB complex plays an important role in the rescue of blocked DNA replication forks via replication fork reversal (RFR). RuvA specifically binds to HJ cruciform DNA, conferring on it an open structure. The RuvB hexamer acts as an ATP-dependent pump, pulling dsDNA into and through the RuvAB complex. RuvB forms 2 homohexamers on either side of HJ DNA bound by 1 or 2 RuvA tetramers; 4 subunits per hexamer contact DNA at a time. Coordinated motions by a converter formed by DNA-disengaged RuvB subunits stimulates ATP hydrolysis and nucleotide exchange. Immobilization of the converter enables RuvB to convert the ATP-contained energy into a lever motion, pulling 2 nucleotides of DNA out of the RuvA tetramer per ATP hydrolyzed, thus driving DNA branch migration. The RuvB motors rotate together with the DNA substrate, which together with the progressing nucleotide cycle form the mechanistic basis for DNA recombination by continuous HJ branch migration. Branch migration allows RuvC to scan DNA until it finds its consensus sequence, where it cleaves and resolves cruciform DNA. The sequence is that of Holliday junction branch migration complex subunit RuvB from Actinobacillus succinogenes (strain ATCC 55618 / DSM 22257 / CCUG 43843 / 130Z).